A 431-amino-acid polypeptide reads, in one-letter code: Serine hydroxymethyltransferase (431 aa).

Residues Leu121 and 125-127 (GHL) each bind (6S)-5,6,7,8-tetrahydrofolate. Lys230 is modified (N6-(pyridoxal phosphate)lysine). 369–371 (SPF) is a (6S)-5,6,7,8-tetrahydrofolate binding site.

The protein belongs to the SHMT family. As to quaternary structure, homodimer. Pyridoxal 5'-phosphate is required as a cofactor.

It localises to the cytoplasm. The enzyme catalyses (6R)-5,10-methylene-5,6,7,8-tetrahydrofolate + glycine + H2O = (6S)-5,6,7,8-tetrahydrofolate + L-serine. Its pathway is one-carbon metabolism; tetrahydrofolate interconversion. The protein operates within amino-acid biosynthesis; glycine biosynthesis; glycine from L-serine: step 1/1. In terms of biological role, catalyzes the reversible interconversion of serine and glycine with tetrahydrofolate (THF) serving as the one-carbon carrier. This reaction serves as the major source of one-carbon groups required for the biosynthesis of purines, thymidylate, methionine, and other important biomolecules. Also exhibits THF-independent aldolase activity toward beta-hydroxyamino acids, producing glycine and aldehydes, via a retro-aldol mechanism. The sequence is that of Serine hydroxymethyltransferase from Cytophaga hutchinsonii (strain ATCC 33406 / DSM 1761 / CIP 103989 / NBRC 15051 / NCIMB 9469 / D465).